We begin with the raw amino-acid sequence, 389 residues long: D(-)-tartrate dehydratase (389 aa).

Substrate is bound by residues Asn-21, Asn-55, Lys-102, Tyr-156, Lys-182, 182 to 184, 213 to 215, Glu-239, Glu-265, His-322, and 341 to 343; these read KMK, DAN, and ESY. Lys-184 acts as the acceptor in catalysis. 3 residues coordinate Mg(2+): Asp-213, Glu-239, and Glu-265. His-322 (proton donor/acceptor) is an active-site residue.

This sequence belongs to the mandelate racemase/muconate lactonizing enzyme family. Homooctamer; tetramer of dimers. Requires Mg(2+) as cofactor.

It catalyses the reaction (S,S)-tartrate = oxaloacetate + H2O. Its function is as follows. Catalyzes the dehydration of D-tartrate to oxaloacetate. The protein is D(-)-tartrate dehydratase (tarD) of Bradyrhizobium diazoefficiens (strain JCM 10833 / BCRC 13528 / IAM 13628 / NBRC 14792 / USDA 110).